The chain runs to 87 residues: Small ribosomal subunit protein bS16 (87 aa).

Belongs to the bacterial ribosomal protein bS16 family.

This Desulfatibacillum aliphaticivorans protein is Small ribosomal subunit protein bS16.